A 283-amino-acid polypeptide reads, in one-letter code: NADPH-dependent 7-cyano-7-deazaguanine reductase (283 aa).

90–92 (IES) is a substrate binding site. Position 92–93 (92–93 (SK)) interacts with NADPH. The active-site Thioimide intermediate is the cysteine 191. Aspartate 198 functions as the Proton donor in the catalytic mechanism. 230 to 231 (HE) contacts substrate. 259–260 (RG) lines the NADPH pocket.

The protein belongs to the GTP cyclohydrolase I family. QueF type 2 subfamily. As to quaternary structure, homodimer.

The protein localises to the cytoplasm. It catalyses the reaction 7-aminomethyl-7-carbaguanine + 2 NADP(+) = 7-cyano-7-deazaguanine + 2 NADPH + 3 H(+). It participates in tRNA modification; tRNA-queuosine biosynthesis. Its function is as follows. Catalyzes the NADPH-dependent reduction of 7-cyano-7-deazaguanine (preQ0) to 7-aminomethyl-7-deazaguanine (preQ1). The chain is NADPH-dependent 7-cyano-7-deazaguanine reductase from Tolumonas auensis (strain DSM 9187 / NBRC 110442 / TA 4).